The primary structure comprises 648 residues: DNA gyrase subunit B (648 aa).

The Toprim domain occupies 427 to 541; the sequence is TELFIVEGDS…AGYVYIAQPP (115 aa). Residues Glu-433, Asp-506, and Asp-508 each contribute to the Mg(2+) site.

The protein belongs to the type II topoisomerase GyrB family. In terms of assembly, heterotetramer, composed of two GyrA and two GyrB chains. In the heterotetramer, GyrA contains the active site tyrosine that forms a transient covalent intermediate with DNA, while GyrB binds cofactors and catalyzes ATP hydrolysis. It depends on Mg(2+) as a cofactor. The cofactor is Mn(2+). Ca(2+) is required as a cofactor.

It localises to the cytoplasm. The enzyme catalyses ATP-dependent breakage, passage and rejoining of double-stranded DNA.. In terms of biological role, a type II topoisomerase that negatively supercoils closed circular double-stranded (ds) DNA in an ATP-dependent manner to modulate DNA topology and maintain chromosomes in an underwound state. Negative supercoiling favors strand separation, and DNA replication, transcription, recombination and repair, all of which involve strand separation. Also able to catalyze the interconversion of other topological isomers of dsDNA rings, including catenanes and knotted rings. Type II topoisomerases break and join 2 DNA strands simultaneously in an ATP-dependent manner. This is DNA gyrase subunit B from Streptococcus pneumoniae serotype 4 (strain ATCC BAA-334 / TIGR4).